The sequence spans 207 residues: Thiamine-phosphate synthase (207 aa).

4-amino-2-methyl-5-(diphosphooxymethyl)pyrimidine-binding positions include 37–41 (QYRHK) and Asn-69. The Mg(2+) site is built by Asp-70 and Asp-89. 4-amino-2-methyl-5-(diphosphooxymethyl)pyrimidine contacts are provided by Ser-108 and Lys-138. Residues Gly-165 and 185 to 186 (IS) contribute to the 2-[(2R,5Z)-2-carboxy-4-methylthiazol-5(2H)-ylidene]ethyl phosphate site.

The protein belongs to the thiamine-phosphate synthase family. The cofactor is Mg(2+).

It carries out the reaction 2-[(2R,5Z)-2-carboxy-4-methylthiazol-5(2H)-ylidene]ethyl phosphate + 4-amino-2-methyl-5-(diphosphooxymethyl)pyrimidine + 2 H(+) = thiamine phosphate + CO2 + diphosphate. The enzyme catalyses 2-(2-carboxy-4-methylthiazol-5-yl)ethyl phosphate + 4-amino-2-methyl-5-(diphosphooxymethyl)pyrimidine + 2 H(+) = thiamine phosphate + CO2 + diphosphate. It catalyses the reaction 4-methyl-5-(2-phosphooxyethyl)-thiazole + 4-amino-2-methyl-5-(diphosphooxymethyl)pyrimidine + H(+) = thiamine phosphate + diphosphate. It participates in cofactor biosynthesis; thiamine diphosphate biosynthesis; thiamine phosphate from 4-amino-2-methyl-5-diphosphomethylpyrimidine and 4-methyl-5-(2-phosphoethyl)-thiazole: step 1/1. Condenses 4-methyl-5-(beta-hydroxyethyl)thiazole monophosphate (THZ-P) and 2-methyl-4-amino-5-hydroxymethyl pyrimidine pyrophosphate (HMP-PP) to form thiamine monophosphate (TMP). The chain is Thiamine-phosphate synthase from Janthinobacterium sp. (strain Marseille) (Minibacterium massiliensis).